Reading from the N-terminus, the 67-residue chain is Beta-defensin 103A (67 aa).

The signal sequence occupies residues 1–22 (MRIHYLLFALLFLFLVPVPGHG). 3 cysteine pairs are disulfide-bonded: C33–C62, C40–C55, and C45–C63.

It belongs to the beta-defensin family.

The protein resides in the secreted. Its function is as follows. Exhibits antimicrobial activity against Gram-positive and Gram-negative bacteria. This is Beta-defensin 103A (DEFB103A) from Pan troglodytes (Chimpanzee).